Here is a 156-residue protein sequence, read N- to C-terminus: MPRRRVIGQRKILPDPKFGSELLAKFVNILMVDGKKSTAESIVYSALETLAQRSGKSELEAFEVALENVRPTVEVKSRRVGGSTYQVPVEVRPVRRNALAMRWIVEAARKRGDKSMALRLANELSDAADNKGTAVKKREDVHRMAEANKAFAHYRW.

This sequence belongs to the universal ribosomal protein uS7 family. In terms of assembly, part of the 30S ribosomal subunit. Contacts proteins S9 and S11.

Its function is as follows. One of the primary rRNA binding proteins, it binds directly to 16S rRNA where it nucleates assembly of the head domain of the 30S subunit. Is located at the subunit interface close to the decoding center, probably blocks exit of the E-site tRNA. The chain is Small ribosomal subunit protein uS7 from Cronobacter sakazakii (strain ATCC BAA-894) (Enterobacter sakazakii).